Consider the following 359-residue polypeptide: UDP-3-O-acylglucosamine N-acyltransferase (359 aa).

His253 serves as the catalytic Proton acceptor.

This sequence belongs to the transferase hexapeptide repeat family. LpxD subfamily. As to quaternary structure, homotrimer.

The enzyme catalyses a UDP-3-O-[(3R)-3-hydroxyacyl]-alpha-D-glucosamine + a (3R)-hydroxyacyl-[ACP] = a UDP-2-N,3-O-bis[(3R)-3-hydroxyacyl]-alpha-D-glucosamine + holo-[ACP] + H(+). It functions in the pathway bacterial outer membrane biogenesis; LPS lipid A biosynthesis. Functionally, catalyzes the N-acylation of UDP-3-O-acylglucosamine using 3-hydroxyacyl-ACP as the acyl donor. Is involved in the biosynthesis of lipid A, a phosphorylated glycolipid that anchors the lipopolysaccharide to the outer membrane of the cell. This Burkholderia cenocepacia (strain ATCC BAA-245 / DSM 16553 / LMG 16656 / NCTC 13227 / J2315 / CF5610) (Burkholderia cepacia (strain J2315)) protein is UDP-3-O-acylglucosamine N-acyltransferase.